The sequence spans 180 residues: Ribulose bisphosphate carboxylase small subunit, chloroplastic (180 aa).

Residues 1-56 constitute a chloroplast transit peptide; that stretch reads MALISSAAVTTVNRASSAQANLVAPFTGLKSSAGFPVTKKTNNDITSIASNGGRVN.

It belongs to the RuBisCO small chain family. In terms of assembly, heterohexadecamer of 8 large and 8 small subunits.

It localises to the plastid. Its subcellular location is the chloroplast. Functionally, ruBisCO catalyzes two reactions: the carboxylation of D-ribulose 1,5-bisphosphate, the primary event in carbon dioxide fixation, as well as the oxidative fragmentation of the pentose substrate. Both reactions occur simultaneously and in competition at the same active site. Although the small subunit is not catalytic it is essential for maximal activity. The protein is Ribulose bisphosphate carboxylase small subunit, chloroplastic of Medicago sativa (Alfalfa).